The following is a 238-amino-acid chain: Uridylate kinase (238 aa).

12 to 15 provides a ligand contact to ATP; that stretch reads KLSG. G54 lines the UMP pocket. The ATP site is built by G55 and R59. UMP contacts are provided by residues D74 and 135–142; that span reads TGNPFFTT. ATP is bound by residues T162, N163, Y168, and D171.

The protein belongs to the UMP kinase family. As to quaternary structure, homohexamer.

It is found in the cytoplasm. It carries out the reaction UMP + ATP = UDP + ADP. Its pathway is pyrimidine metabolism; CTP biosynthesis via de novo pathway; UDP from UMP (UMPK route): step 1/1. With respect to regulation, inhibited by UTP. Its function is as follows. Catalyzes the reversible phosphorylation of UMP to UDP. This Rhodopseudomonas palustris (strain HaA2) protein is Uridylate kinase.